We begin with the raw amino-acid sequence, 101 residues long: Phosphoprotein OPG062 (101 aa).

Residues 48–76 form a disordered region; it reads VDKPSSPASERRPSSPSRCERMNNPGKQV. S53 and S62 each carry phosphoserine. Basic and acidic residues predominate over residues 56-68; that stretch reads SERRPSSPSRCER.

It belongs to the orthopoxvirus OPG062 family. In terms of assembly, self-associates to form high molecular-weight forms. Interacts with protein OPG157. Interacts with host RICTOR and RPTOR; these interactions disrupt the mTORC1 and mTORC2 crosstalk. Phosphorylated on two serines. While these phosphorylations do not play a role in virion assembly; they are essential for the interaction with host RICTOR and RPTOR.

Its subcellular location is the virion. Its function is as follows. Plays an essential role in virion assembly and morphogenesis. Also plays a role in the inhibition of host immune response by dysregulating mTOR. Sequesters host RICTOR and RPTOR, thereby disrupting mTORC1 and mTORC2 crosstalk. In turn, blocks the host antiviral response in part through mTOR-dependent degradation of cGAS, the primary poxvirus sensor. This chain is Phosphoprotein OPG062 (OPG062), found in Variola virus (isolate Human/India/Ind3/1967) (VARV).